The following is a 385-amino-acid chain: MNHLRAEGPASVLAIGTANPENILIQDEFPDYYFRVTKSEHMTQLKEKFRKICDKSMIRKRNCFLNEEHLKQNPRLVEHEMQTLDARQDMLVVEVPKLGKDACAKAIKEWGQPKSKITHLIFTSASTTDMPGADYHCAKLLGLSPSVKRVMMYQLGCYGGGTVLRIAKDIAENNKGARVLAVCCDMTACLFRGPSDSNLELLVGQAIFGDGAAAVIVGAEPDESVGERPIFELVSTGQTFLPNSEGTIGGHIREAGLMFDLHKDVPMLISNNIEKCLIEAFTPIGISDWNSIFWITHPGGKAILDKVEEKLHLKSDKFVDSRHVLSEHGNMSSSTVLFVMDELRKRSLEEGKSTTGDGFEWGVLFGFGPGLTVERVVLRSVPINY.

Cys157 is an active-site residue.

The protein belongs to the thiolase-like superfamily. Chalcone/stilbene synthases family. Expressed in leaves and glandular trichomes.

The protein resides in the cytoplasm. Functionally, polyketide synthase responsible for the biosynthesis of secondary metabolites. In Cannabis sativa (Hemp), this protein is Polyketide synthase 2 (PKSG2).